The following is a 297-amino-acid chain: Acetylglutamate kinase (297 aa).

Residues 68–69 (GG), R90, and N189 contribute to the substrate site.

This sequence belongs to the acetylglutamate kinase family. ArgB subfamily.

The protein resides in the cytoplasm. The enzyme catalyses N-acetyl-L-glutamate + ATP = N-acetyl-L-glutamyl 5-phosphate + ADP. The protein operates within amino-acid biosynthesis; L-arginine biosynthesis; N(2)-acetyl-L-ornithine from L-glutamate: step 2/4. Its function is as follows. Catalyzes the ATP-dependent phosphorylation of N-acetyl-L-glutamate. This is Acetylglutamate kinase from Akkermansia muciniphila (strain ATCC BAA-835 / DSM 22959 / JCM 33894 / BCRC 81048 / CCUG 64013 / CIP 107961 / Muc).